The sequence spans 118 residues: Putative pterin-4-alpha-carbinolamine dehydratase (118 aa).

The protein belongs to the pterin-4-alpha-carbinolamine dehydratase family.

The catalysed reaction is (4aS,6R)-4a-hydroxy-L-erythro-5,6,7,8-tetrahydrobiopterin = (6R)-L-erythro-6,7-dihydrobiopterin + H2O. The polypeptide is Putative pterin-4-alpha-carbinolamine dehydratase (Xanthomonas oryzae pv. oryzae (strain MAFF 311018)).